Consider the following 258-residue polypeptide: Flap endonuclease Xni (258 aa).

D109 is a Mg(2+) binding site. The region spanning 165–254 (VKPEQLPDYW…GFNLQDIRYL (90 aa)) is the 5'-3' exonuclease domain. K(+)-binding residues include L176, A177, P185, I187, and I190. The interaction with DNA stretch occupies residues 189 to 194 (GIGPKA).

It belongs to the Xni family. The cofactor is Mg(2+). It depends on K(+) as a cofactor.

In terms of biological role, has flap endonuclease activity. During DNA replication, flap endonucleases cleave the 5'-overhanging flap structure that is generated by displacement synthesis when DNA polymerase encounters the 5'-end of a downstream Okazaki fragment. The protein is Flap endonuclease Xni of Photobacterium profundum (strain SS9).